The primary structure comprises 433 residues: Myricetin 3-O-glucosyl 1,2-rhamnoside 6'-O-caffeoyltransferase AT1 (433 aa).

Catalysis depends on proton acceptor residues histidine 157 and aspartate 375.

The protein belongs to the plant acyltransferase family. Expressed in young cromes.

It carries out the reaction myricetin 3-O-[beta-D-glucosyl-(1-&gt;2)-alpha-L-rhamnoside] + (E)-caffeoyl-CoA = myricetin 3-O-[(6-O-(E)-caffeoyl-beta-D-glucosyl)-(1-&gt;2)-alpha-L-rhamnoside] + CoA. The protein operates within flavonoid metabolism. Caffeoyltransferase involved in montbretin A (MbA) biosynthesis. Catalyzes the caffeoylation of myricetin 3-O-beta-D-glucosyl 1,2-alpha-L-rhamnoside (MRG) to produce myricetin 3-O-(6'-O-caffeoyl)-beta-D-glucosyl 1,2-alpha-L-rhamnoside (mini-MbA), a precursor of MbA. Mini-MbA and MbA are potent inhibitors of human pancreatic alpha-amylase and are being developed as drug candidates to treat type-2 diabetes. In vitro, is able to catalyze the caffeoylation of quercetin 3-O-sophoroside (QGG), although QGG may not be a physiological substrate in vivo. In vitro, can use coumaryl-CoA, feruloyl-CoA and acetyl-CoA, although these three acyl donors may not be physiological in vivo. This chain is Myricetin 3-O-glucosyl 1,2-rhamnoside 6'-O-caffeoyltransferase AT1, found in Crocosmia x crocosmiiflora (Montbretia).